The sequence spans 682 residues: Potassium-transporting ATPase ATP-binding subunit (682 aa).

Transmembrane regions (helical) follow at residues 34-54 (PVMF…LAMV), 58-78 (IAGS…TVLF), 219-239 (IALT…TATL), and 254-274 (VLVA…LSAI). Residue Asp307 is the 4-aspartylphosphate intermediate of the active site. Residues Asp344, Glu348, 377 to 384 (FTAQSRMS), and Lys395 contribute to the ATP site. Mg(2+) contacts are provided by Asp518 and Asp522. 3 helical membrane passes run 588–608 (FAII…LNVM), 616–636 (AILS…PLAL), and 662–682 (LVVP…LGLA).

It belongs to the cation transport ATPase (P-type) (TC 3.A.3) family. Type IA subfamily. As to quaternary structure, the system is composed of three essential subunits: KdpA, KdpB and KdpC.

It localises to the cell inner membrane. It catalyses the reaction K(+)(out) + ATP + H2O = K(+)(in) + ADP + phosphate + H(+). Part of the high-affinity ATP-driven potassium transport (or Kdp) system, which catalyzes the hydrolysis of ATP coupled with the electrogenic transport of potassium into the cytoplasm. This subunit is responsible for energy coupling to the transport system and for the release of the potassium ions to the cytoplasm. In Salmonella paratyphi A (strain ATCC 9150 / SARB42), this protein is Potassium-transporting ATPase ATP-binding subunit.